Reading from the N-terminus, the 435-residue chain is 5-methylthioadenosine/S-adenosylhomocysteine deaminase (435 aa).

Zn(2+) is bound by residues His-65 and His-67. Substrate contacts are provided by Glu-94, Arg-150, and His-189. Residue His-216 participates in Zn(2+) binding. Positions 219 and 304 each coordinate substrate. Asp-304 lines the Zn(2+) pocket.

Belongs to the metallo-dependent hydrolases superfamily. MTA/SAH deaminase family. Requires Zn(2+) as cofactor.

It carries out the reaction S-adenosyl-L-homocysteine + H2O + H(+) = S-inosyl-L-homocysteine + NH4(+). The enzyme catalyses S-methyl-5'-thioadenosine + H2O + H(+) = S-methyl-5'-thioinosine + NH4(+). Catalyzes the deamination of 5-methylthioadenosine and S-adenosyl-L-homocysteine into 5-methylthioinosine and S-inosyl-L-homocysteine, respectively. Is also able to deaminate adenosine. This is 5-methylthioadenosine/S-adenosylhomocysteine deaminase from Bacillus cereus (strain ZK / E33L).